The chain runs to 459 residues: Anthocyanidin 3-O-glucoside 2''-O-glucosyltransferase (459 aa).

Histidine 20 serves as the catalytic Proton acceptor. Histidine 20 provides a ligand contact to an anthocyanidin. Aspartate 117 serves as the catalytic Charge relay. UDP-alpha-D-glucose-binding residues include threonine 138, valine 335, glutamine 337, histidine 352, tryptophan 355, serine 357, and glutamate 360. An anthocyanidin is bound at residue glycine 375. The UDP-alpha-D-glucose site is built by aspartate 376 and glutamine 377.

It belongs to the UDP-glycosyltransferase family.

It catalyses the reaction an anthocyanidin 3-O-beta-D-glucoside + UDP-alpha-D-glucose = an anthocyanidin 3-O-sophoroside + UDP + 2 H(+). It functions in the pathway pigment biosynthesis; anthocyanin biosynthesis. Glycosyltransferase that mediates the glucosylation of anthocyanidin 3-O-glucosides to yield anthocyanidin 3-O-sophorosides. 3-O-sophoroside derivatives are required for the color of flowers. The sequence is that of Anthocyanidin 3-O-glucoside 2''-O-glucosyltransferase (3GGT) from Ipomoea purpurea (Common morning glory).